Here is a 674-residue protein sequence, read N- to C-terminus: Probable L-type lectin-domain containing receptor kinase I.5 (674 aa).

Residues 1–22 (MSKGLFLIWLISSFHLISFSTS) form the signal peptide. Residues 23 to 286 (SKDTSFVFNG…RPRAEHKKVQ (264 aa)) are Extracellular-facing. A legume-lectin like region spans residues 25-258 (DTSFVFNGFG…YHYLLGWSFS (234 aa)). N-linked (GlcNAc...) asparagine glycans are attached at residues N124, N181, N185, N204, and N225. The chain crosses the membrane as a helical span at residues 287–307 (FALIIALPVILAIVVMAVLAG). Topologically, residues 308–674 (VYYHRKKKYA…DHEQPLEFKS (367 aa)) are cytoplasmic. The Protein kinase domain occupies 344 to 625 (FHKDRFLGRG…LPLPDFSPYT (282 aa)). Residues 350-358 (LGRGGFGEV) and K372 each bind ATP. The active-site Proton acceptor is the D468. The segment covering 649–662 (NWSAPSASSSSANN) has biased composition (low complexity). The tract at residues 649–674 (NWSAPSASSSSANNSKDHEQPLEFKS) is disordered. Residues 663–674 (SKDHEQPLEFKS) show a composition bias toward basic and acidic residues.

This sequence in the C-terminal section; belongs to the protein kinase superfamily. Ser/Thr protein kinase family. It in the N-terminal section; belongs to the leguminous lectin family.

The protein resides in the cell membrane. It catalyses the reaction L-seryl-[protein] + ATP = O-phospho-L-seryl-[protein] + ADP + H(+). The enzyme catalyses L-threonyl-[protein] + ATP = O-phospho-L-threonyl-[protein] + ADP + H(+). In Arabidopsis thaliana (Mouse-ear cress), this protein is Probable L-type lectin-domain containing receptor kinase I.5 (LECRK15).